The chain runs to 286 residues: MSAIDDLPPLREVIREHQLSARKALGQNFLLDLNLTARIARAAGPLEDATVVEIGPGPGGLTRALLALGARHVIAVEHDERAIPALRTIADRYPGRLEIVYTDARTFDVRPYLGSTKAKIVANLPYNIATHLLIGWLSAEPWPPWYEMMVLMFQREVAERIVATENEEAYGRLGVLANWRCETKILFDISPSAFVPPPKVTSSVVRLVPRPAPEPCDRRALEQVAAAAFGQRRKMLRQSLKSLPADPARLAAAAGIDPTRRAETIPVSGFVAMARELTNSRNDNTT.

S-adenosyl-L-methionine-binding residues include Asn28, Leu30, Gly55, Glu77, Asp103, and Asn123.

The protein belongs to the class I-like SAM-binding methyltransferase superfamily. rRNA adenine N(6)-methyltransferase family. RsmA subfamily.

Its subcellular location is the cytoplasm. The catalysed reaction is adenosine(1518)/adenosine(1519) in 16S rRNA + 4 S-adenosyl-L-methionine = N(6)-dimethyladenosine(1518)/N(6)-dimethyladenosine(1519) in 16S rRNA + 4 S-adenosyl-L-homocysteine + 4 H(+). Specifically dimethylates two adjacent adenosines (A1518 and A1519) in the loop of a conserved hairpin near the 3'-end of 16S rRNA in the 30S particle. May play a critical role in biogenesis of 30S subunits. This is Ribosomal RNA small subunit methyltransferase A from Bradyrhizobium sp. (strain ORS 278).